Consider the following 627-residue polypeptide: Phosphomethylpyrimidine synthase (627 aa).

Residues methionine 1–proline 24 are compositionally biased toward polar residues. Residues methionine 1–valine 29 form a disordered region. Substrate contacts are provided by residues asparagine 231, methionine 260, tyrosine 289, histidine 325, serine 345–glycine 347, aspartate 386–arginine 389, and glutamate 425. Histidine 429 contributes to the Zn(2+) binding site. Tyrosine 452 is a substrate binding site. Histidine 493 serves as a coordination point for Zn(2+). [4Fe-4S] cluster-binding residues include cysteine 573, cysteine 576, and cysteine 581.

Belongs to the ThiC family. In terms of assembly, homodimer. It depends on [4Fe-4S] cluster as a cofactor.

The enzyme catalyses 5-amino-1-(5-phospho-beta-D-ribosyl)imidazole + S-adenosyl-L-methionine = 4-amino-2-methyl-5-(phosphooxymethyl)pyrimidine + CO + 5'-deoxyadenosine + formate + L-methionine + 3 H(+). The protein operates within cofactor biosynthesis; thiamine diphosphate biosynthesis. Its function is as follows. Catalyzes the synthesis of the hydroxymethylpyrimidine phosphate (HMP-P) moiety of thiamine from aminoimidazole ribotide (AIR) in a radical S-adenosyl-L-methionine (SAM)-dependent reaction. In Pseudomonas aeruginosa (strain LESB58), this protein is Phosphomethylpyrimidine synthase.